A 630-amino-acid chain; its full sequence is MESVALHRRGNLAPSASALATESARPLADRLIKSPKPLMKKQAVKRHHHKHNLRHRYEFLETLGKGTYGKVKKARESSGRLVAIKSIRKDKIKDEQDLLHIRREIEIMSSLNHPHIIAIHEVFENSSKIVIVMEYASRGDLYDYISERPRLNERDARHFFRQIVSALHYCHQNGIVHRDLKLENILLDASGNIKIADFGLSNLYHKGKFLQTFCGSPLYASPEIVNGKPYVGPEVDSWSLGVLLYILVHGTMPFDGQDHKTLVKQISSGAYREPCKPSDACGLIRWLLMVNPIRRATLEDVASHWWVNWGYSTRIGEQEALREGGHPSGDSGRASMADWLRRSSRPLLENGAKVCSFFKQHVPGGGSTGPGLERQHSLKKSRKENDMAQTLQNDPAEDTSSRPGKNSLKLPKGILKKKASPSSGEVQEGPQELRPVSNTPGQPVPAIPLLPRKGILKKSRQRESGYYSSPEPSESGELLDAGDVFVSGDPMEQKSPQASGRLHRKGILKLNGKFSRTALEGTAPSTFGSLDQLASPHPTARASRPSGAVSEDSILSSESFDQLDLPERLPETPLRGCVSVDNLRRLEQPPSEGLKRWWQESLGDSCFSLTDCQEVTAAYRQALGICSKLS.

An N-acetylmethionine modification is found at M1. A Protein kinase domain is found at 57 to 307 (YEFLETLGKG…LEDVASHWWV (251 aa)). ATP contacts are provided by residues 63–71 (LGKGTYGKV) and K85. The active-site Proton acceptor is D179. At T212 the chain carries Phosphothreonine. Disordered stretches follow at residues 361–504 (HVPG…RLHR) and 521–566 (GTAP…LDLP). Low complexity predominate over residues 464-476 (SGYYSSPEPSESG). A phosphoserine mark is found at S529, S550, S553, and S579.

This sequence belongs to the protein kinase superfamily. CAMK Ser/Thr protein kinase family. SNF1 subfamily. Mg(2+) is required as a cofactor. In terms of processing, phosphorylated at Thr-212 by STK11/LKB1 in complex with STE20-related adapter-alpha (STRADA) pseudo kinase and CAB39. Autophosphorylation is also possible at Thr-212. As to expression, expressed in liver, skin, testis, uterus, ovary, adrenal gland and brain (at protein level). Expressed in kidney, heart, skin, spleen, lung, uterus, liver and the exocrine and endocrine compartments of the human pancreas. A kinase-inactive isoform also appears to be expressed in the skin, spleen, lung, uterus, liver and testis.

It carries out the reaction L-seryl-[protein] + ATP = O-phospho-L-seryl-[protein] + ADP + H(+). It catalyses the reaction L-threonyl-[protein] + ATP = O-phospho-L-threonyl-[protein] + ADP + H(+). Activated by phosphorylation on Thr-212 by STK11 in complex with STE20-related adapter-alpha (STRAD alpha) pseudo kinase and CAB39. Its function is as follows. Stress-activated kinase involved in tolerance to glucose starvation. Induces cell-cell detachment by increasing F-actin conversion to G-actin. Expression is induced by CD95 or TNF-alpha, via NF-kappa-B. Protects cells from CD95-mediated apoptosis and is required for the increased motility and invasiveness of CD95-activated tumor cells. Phosphorylates LATS1 and LATS2. Plays a key role in neural tube closure during embryonic development through LATS2 phosphorylation and regulation of the nuclear localization of YAP1 a critical downstream regulatory target in the Hippo signaling pathway. This is NUAK family SNF1-like kinase 2 from Rattus norvegicus (Rat).